The primary structure comprises 360 residues: Phospho-N-acetylmuramoyl-pentapeptide-transferase (360 aa).

Transmembrane regions (helical) follow at residues 27–47, 71–91, 93–113, 128–148, 168–188, 199–219, 239–259, 262–282, 288–308, and 337–357; these read GAMI…INSL, TPTM…LLWA, LASV…AIGF, FSGK…AFTI, LVIN…VGAG, GLAI…AYLS, LAVV…FNAP, AIFM…TVAV, IVLA…IIQV, and QVVI…LSTL.

Belongs to the glycosyltransferase 4 family. MraY subfamily. Requires Mg(2+) as cofactor.

The protein localises to the cell inner membrane. The enzyme catalyses UDP-N-acetyl-alpha-D-muramoyl-L-alanyl-gamma-D-glutamyl-meso-2,6-diaminopimeloyl-D-alanyl-D-alanine + di-trans,octa-cis-undecaprenyl phosphate = di-trans,octa-cis-undecaprenyl diphospho-N-acetyl-alpha-D-muramoyl-L-alanyl-D-glutamyl-meso-2,6-diaminopimeloyl-D-alanyl-D-alanine + UMP. Its pathway is cell wall biogenesis; peptidoglycan biosynthesis. Functionally, catalyzes the initial step of the lipid cycle reactions in the biosynthesis of the cell wall peptidoglycan: transfers peptidoglycan precursor phospho-MurNAc-pentapeptide from UDP-MurNAc-pentapeptide onto the lipid carrier undecaprenyl phosphate, yielding undecaprenyl-pyrophosphoryl-MurNAc-pentapeptide, known as lipid I. The protein is Phospho-N-acetylmuramoyl-pentapeptide-transferase of Brucella ovis (strain ATCC 25840 / 63/290 / NCTC 10512).